Reading from the N-terminus, the 462-residue chain is Glutamate--tRNA ligase 1 (462 aa).

Positions Pro-8–Gly-18 match the 'HIGH' region motif. The 'KMSKS' region signature appears at Lys-237–Arg-241. Lys-240 lines the ATP pocket.

The protein belongs to the class-I aminoacyl-tRNA synthetase family. Glutamate--tRNA ligase type 1 subfamily. As to quaternary structure, monomer.

The protein localises to the cytoplasm. It carries out the reaction tRNA(Glu) + L-glutamate + ATP = L-glutamyl-tRNA(Glu) + AMP + diphosphate. Functionally, catalyzes the attachment of glutamate to tRNA(Glu) in a two-step reaction: glutamate is first activated by ATP to form Glu-AMP and then transferred to the acceptor end of tRNA(Glu). The polypeptide is Glutamate--tRNA ligase 1 (Sulfurimonas denitrificans (strain ATCC 33889 / DSM 1251) (Thiomicrospira denitrificans (strain ATCC 33889 / DSM 1251))).